The following is a 502-amino-acid chain: Probable cytosol aminopeptidase 2 (502 aa).

Residues K269 and D274 each coordinate Mn(2+). K281 is an active-site residue. The Mn(2+) site is built by D292, D351, and E353. R355 is an active-site residue.

Belongs to the peptidase M17 family. Requires Mn(2+) as cofactor.

It localises to the cytoplasm. It carries out the reaction Release of an N-terminal amino acid, Xaa-|-Yaa-, in which Xaa is preferably Leu, but may be other amino acids including Pro although not Arg or Lys, and Yaa may be Pro. Amino acid amides and methyl esters are also readily hydrolyzed, but rates on arylamides are exceedingly low.. The catalysed reaction is Release of an N-terminal amino acid, preferentially leucine, but not glutamic or aspartic acids.. Its function is as follows. Presumably involved in the processing and regular turnover of intracellular proteins. Catalyzes the removal of unsubstituted N-terminal amino acids from various peptides. This Shewanella oneidensis (strain ATCC 700550 / JCM 31522 / CIP 106686 / LMG 19005 / NCIMB 14063 / MR-1) protein is Probable cytosol aminopeptidase 2 (pepA2).